The following is a 199-amino-acid chain: ATP-dependent Clp protease proteolytic subunit (199 aa).

Serine 99 acts as the Nucleophile in catalysis. Residue histidine 124 is part of the active site.

This sequence belongs to the peptidase S14 family. As to quaternary structure, fourteen ClpP subunits assemble into 2 heptameric rings which stack back to back to give a disk-like structure with a central cavity, resembling the structure of eukaryotic proteasomes.

The protein resides in the cytoplasm. The catalysed reaction is Hydrolysis of proteins to small peptides in the presence of ATP and magnesium. alpha-casein is the usual test substrate. In the absence of ATP, only oligopeptides shorter than five residues are hydrolyzed (such as succinyl-Leu-Tyr-|-NHMec, and Leu-Tyr-Leu-|-Tyr-Trp, in which cleavage of the -Tyr-|-Leu- and -Tyr-|-Trp bonds also occurs).. Cleaves peptides in various proteins in a process that requires ATP hydrolysis. Has a chymotrypsin-like activity. Plays a major role in the degradation of misfolded proteins. The protein is ATP-dependent Clp protease proteolytic subunit of Lactococcus lactis subsp. lactis (strain IL1403) (Streptococcus lactis).